The sequence spans 357 residues: UDP-N-acetylglucosamine--N-acetylmuramyl-(pentapeptide) pyrophosphoryl-undecaprenol N-acetylglucosamine transferase (357 aa).

UDP-N-acetyl-alpha-D-glucosamine contacts are provided by residues 12 to 14 (TAG), arginine 166, serine 196, and glutamine 291.

The protein belongs to the glycosyltransferase 28 family. MurG subfamily.

The protein localises to the cell membrane. It catalyses the reaction di-trans,octa-cis-undecaprenyl diphospho-N-acetyl-alpha-D-muramoyl-L-alanyl-D-glutamyl-meso-2,6-diaminopimeloyl-D-alanyl-D-alanine + UDP-N-acetyl-alpha-D-glucosamine = di-trans,octa-cis-undecaprenyl diphospho-[N-acetyl-alpha-D-glucosaminyl-(1-&gt;4)]-N-acetyl-alpha-D-muramoyl-L-alanyl-D-glutamyl-meso-2,6-diaminopimeloyl-D-alanyl-D-alanine + UDP + H(+). The protein operates within cell wall biogenesis; peptidoglycan biosynthesis. Functionally, cell wall formation. Catalyzes the transfer of a GlcNAc subunit on undecaprenyl-pyrophosphoryl-MurNAc-pentapeptide (lipid intermediate I) to form undecaprenyl-pyrophosphoryl-MurNAc-(pentapeptide)GlcNAc (lipid intermediate II). In Geobacillus kaustophilus (strain HTA426), this protein is UDP-N-acetylglucosamine--N-acetylmuramyl-(pentapeptide) pyrophosphoryl-undecaprenol N-acetylglucosamine transferase.